The sequence spans 103 residues: Histone H4 (103 aa).

Over residues 1–14 the composition is skewed to gly residues; it reads MTGRGKGGKGLGKG. Residues 1–20 form a disordered region; that stretch reads MTGRGKGGKGLGKGGAKRHR. Lys6 and Lys13 each carry N6-acetyl-N6-methyllysine; alternate. The DNA-binding element occupies 17–21; sequence KRHRK.

It belongs to the histone H4 family. The nucleosome is a histone octamer containing two molecules each of H2A, H2B, H3 and H4 assembled in one H3-H4 heterotetramer and two H2A-H2B heterodimers. The octamer wraps approximately 147 bp of DNA.

The protein resides in the nucleus. It localises to the chromosome. In terms of biological role, core component of nucleosome. Nucleosomes wrap and compact DNA into chromatin, limiting DNA accessibility to the cellular machineries which require DNA as a template. Histones thereby play a central role in transcription regulation, DNA repair, DNA replication and chromosomal stability. DNA accessibility is regulated via a complex set of post-translational modifications of histones, also called histone code, and nucleosome remodeling. This Trichogramma cacaeciae (Moth egg parasite) protein is Histone H4.